Here is a 225-residue protein sequence, read N- to C-terminus: MPVKLAQALANPLFPALDSALRSGRHIGLDELDNHAFLMDFQEYLEEFYARYNVELIRAPEGFFYLRPRSTTLIPRSVLSELDMMVGKILCYLYLSPERLANEGIFTQQELYDELLTLADEAKLLKLVNNRSTGSDIDRQKLQEKVRSSLNRLRRLGMVWFMGHDSSKFRITESVFRFGADVRAGDDPREAQRRLIRDGEAMPIENHLQLNDETEENQPDSGEEE.

The interval arginine 197–glutamate 225 is disordered. Positions aspartate 212–glutamate 225 are enriched in acidic residues.

The protein belongs to the MukE family. Interacts, and probably forms a ternary complex, with MukF and MukB. The complex formation is stimulated by calcium or magnesium.

Its subcellular location is the cytoplasm. The protein localises to the nucleoid. Its function is as follows. Involved in chromosome condensation, segregation and cell cycle progression. May participate in facilitating chromosome segregation by condensation DNA from both sides of a centrally located replisome during cell division. Probably acts via its interaction with MukB and MukF. The protein is Chromosome partition protein MukE of Escherichia coli O157:H7.